Reading from the N-terminus, the 126-residue chain is Aspartate 1-decarboxylase 2 (126 aa).

Ser25 functions as the Schiff-base intermediate with substrate; via pyruvic acid in the catalytic mechanism. A Pyruvic acid (Ser) modification is found at Ser25. Thr57 lines the substrate pocket. Tyr58 functions as the Proton donor in the catalytic mechanism. 73–75 is a binding site for substrate; the sequence is GSA.

The protein belongs to the PanD family. As to quaternary structure, heterooctamer of four alpha and four beta subunits. Pyruvate serves as cofactor. Post-translationally, is synthesized initially as an inactive proenzyme, which is activated by self-cleavage at a specific serine bond to produce a beta-subunit with a hydroxyl group at its C-terminus and an alpha-subunit with a pyruvoyl group at its N-terminus.

The protein resides in the cytoplasm. The enzyme catalyses L-aspartate + H(+) = beta-alanine + CO2. It participates in cofactor biosynthesis; (R)-pantothenate biosynthesis; beta-alanine from L-aspartate: step 1/1. In terms of biological role, catalyzes the pyruvoyl-dependent decarboxylation of aspartate to produce beta-alanine. The chain is Aspartate 1-decarboxylase 2 from Polaromonas sp. (strain JS666 / ATCC BAA-500).